The sequence spans 285 residues: Tropomyosin (285 aa).

Residues methionine 1 to aspartate 273 adopt a coiled-coil conformation.

Belongs to the tropomyosin family. As to quaternary structure, homodimer.

Functionally, tropomyosin, in association with the troponin complex, plays a central role in the calcium dependent regulation of muscle contraction. This chain is Tropomyosin, found in Chironomus kiiensis (Midge).